We begin with the raw amino-acid sequence, 333 residues long: Ribosomal RNA small subunit methyltransferase C (333 aa).

The protein belongs to the methyltransferase superfamily. RsmC family. In terms of assembly, monomer.

The protein localises to the cytoplasm. The enzyme catalyses guanosine(1207) in 16S rRNA + S-adenosyl-L-methionine = N(2)-methylguanosine(1207) in 16S rRNA + S-adenosyl-L-homocysteine + H(+). Specifically methylates the guanine in position 1207 of 16S rRNA in the 30S particle. The sequence is that of Ribosomal RNA small subunit methyltransferase C from Chromohalobacter salexigens (strain ATCC BAA-138 / DSM 3043 / CIP 106854 / NCIMB 13768 / 1H11).